The chain runs to 302 residues: Methionyl-tRNA formyltransferase (302 aa).

(6S)-5,6,7,8-tetrahydrofolate is bound at residue 107–110 (SDLP).

This sequence belongs to the Fmt family.

The catalysed reaction is L-methionyl-tRNA(fMet) + (6R)-10-formyltetrahydrofolate = N-formyl-L-methionyl-tRNA(fMet) + (6S)-5,6,7,8-tetrahydrofolate + H(+). Its function is as follows. Attaches a formyl group to the free amino group of methionyl-tRNA(fMet). The formyl group appears to play a dual role in the initiator identity of N-formylmethionyl-tRNA by promoting its recognition by IF2 and preventing the misappropriation of this tRNA by the elongation apparatus. This is Methionyl-tRNA formyltransferase from Rickettsia massiliae (strain Mtu5).